Reading from the N-terminus, the 348-residue chain is Phospho-N-acetylmuramoyl-pentapeptide-transferase (348 aa).

10 helical membrane passes run Ser11–Gly31, Ala68–Gly88, Thr92–Ile112, Phe128–Gly148, Val165–Gly185, Leu196–Leu216, Pro222–Leu242, Val251–Met271, Leu276–Val296, and Val326–Leu346.

Belongs to the glycosyltransferase 4 family. MraY subfamily. Requires Mg(2+) as cofactor.

The protein resides in the cell inner membrane. It catalyses the reaction UDP-N-acetyl-alpha-D-muramoyl-L-alanyl-gamma-D-glutamyl-meso-2,6-diaminopimeloyl-D-alanyl-D-alanine + di-trans,octa-cis-undecaprenyl phosphate = di-trans,octa-cis-undecaprenyl diphospho-N-acetyl-alpha-D-muramoyl-L-alanyl-D-glutamyl-meso-2,6-diaminopimeloyl-D-alanyl-D-alanine + UMP. Its pathway is cell wall biogenesis; peptidoglycan biosynthesis. Its function is as follows. Catalyzes the initial step of the lipid cycle reactions in the biosynthesis of the cell wall peptidoglycan: transfers peptidoglycan precursor phospho-MurNAc-pentapeptide from UDP-MurNAc-pentapeptide onto the lipid carrier undecaprenyl phosphate, yielding undecaprenyl-pyrophosphoryl-MurNAc-pentapeptide, known as lipid I. The polypeptide is Phospho-N-acetylmuramoyl-pentapeptide-transferase (Chlamydia caviae (strain ATCC VR-813 / DSM 19441 / 03DC25 / GPIC) (Chlamydophila caviae)).